A 416-amino-acid chain; its full sequence is Acyl-coenzyme A amino acid N-acyltransferase 1 (416 aa).

Ser-125 bears the Phosphoserine mark. Catalysis depends on charge relay system residues Ser-235, Asp-325, and His-359. Ser-414 carries the post-translational modification Phosphoserine. The Microbody targeting signal signature appears at Ser-414–Leu-416.

The protein belongs to the C/M/P thioester hydrolase family. In terms of tissue distribution, expressed mainly in liver and kidney with low levels in adrenal and little or no expression in other tissues.

The protein resides in the peroxisome. The enzyme catalyses tetracosanoyl-CoA + taurine = N-tetracosanoyl-taurine + CoA + H(+). The catalysed reaction is eicosanoyl-CoA + taurine = N-eicosanoyl-taurine + CoA + H(+). It catalyses the reaction taurine + octadecanoyl-CoA = N-octadecanoyl-taurine + CoA + H(+). It carries out the reaction taurine + hexadecanoyl-CoA = N-hexadecanoyl-taurine + CoA + H(+). The enzyme catalyses tetradecanoyl-CoA + taurine = N-tetradecanoyl-taurine + CoA + H(+). The catalysed reaction is dodecanoyl-CoA + taurine = N-dodecanoyl-taurine + CoA + H(+). Its function is as follows. Acyltransferase which efficiently conjugates very long-chain and long-chain fatty acids to taurine. Shows no conjugation activity in the presence of glycine. In Mus musculus (Mouse), this protein is Acyl-coenzyme A amino acid N-acyltransferase 1.